Consider the following 256-residue polypeptide: uncharacterized protein (256 aa).

The region spanning 10–64 (IRALRESRDWSLADLAAATGVSTMGLSYLERGARKPHKSTVQKVENGLGLPPGTY) is the HTH cro/C1-type domain. The H-T-H motif DNA-binding region spans 21-40 (LADLAAATGVSTMGLSYLER).

This is an uncharacterized protein from Mycobacterium bovis (strain ATCC BAA-935 / AF2122/97).